The following is a 256-amino-acid chain: Thiazole synthase (256 aa).

Catalysis depends on lysine 95, which acts as the Schiff-base intermediate with DXP. 1-deoxy-D-xylulose 5-phosphate is bound by residues glycine 156, 182–183 (AG), and 204–205 (NT).

This sequence belongs to the ThiG family. Homotetramer. Forms heterodimers with either ThiH or ThiS.

It localises to the cytoplasm. It carries out the reaction [ThiS sulfur-carrier protein]-C-terminal-Gly-aminoethanethioate + 2-iminoacetate + 1-deoxy-D-xylulose 5-phosphate = [ThiS sulfur-carrier protein]-C-terminal Gly-Gly + 2-[(2R,5Z)-2-carboxy-4-methylthiazol-5(2H)-ylidene]ethyl phosphate + 2 H2O + H(+). It participates in cofactor biosynthesis; thiamine diphosphate biosynthesis. In terms of biological role, catalyzes the rearrangement of 1-deoxy-D-xylulose 5-phosphate (DXP) to produce the thiazole phosphate moiety of thiamine. Sulfur is provided by the thiocarboxylate moiety of the carrier protein ThiS. In vitro, sulfur can be provided by H(2)S. The sequence is that of Thiazole synthase from Enterobacter sp. (strain 638).